We begin with the raw amino-acid sequence, 374 residues long: N-acetyldiaminopimelate deacetylase (374 aa).

D68 is a catalytic residue. The active-site Proton acceptor is E127.

This sequence belongs to the peptidase M20A family. N-acetyldiaminopimelate deacetylase subfamily.

It catalyses the reaction N-acetyl-(2S,6S)-2,6-diaminopimelate + H2O = (2S,6S)-2,6-diaminopimelate + acetate. The protein operates within amino-acid biosynthesis; L-lysine biosynthesis via DAP pathway; LL-2,6-diaminopimelate from (S)-tetrahydrodipicolinate (acetylase route): step 3/3. In terms of biological role, catalyzes the conversion of N-acetyl-diaminopimelate to diaminopimelate and acetate. The sequence is that of N-acetyldiaminopimelate deacetylase from Shouchella clausii (strain KSM-K16) (Alkalihalobacillus clausii).